The chain runs to 334 residues: MFASNVVVLNKRSIRFIQTQLPVKATVDMKFDLHLPKRSVIGKLPYHVEEPIVFVHGLFGSKKNYFNDCEKLSNLLQTPIYTIDFRNHGETEHAMPFDYETLTNDLIHFVEKHNLKNPSLIGYSLGAKVSMLALLKQPSLFKSAMIIDNSPVVQPEIVPFLKVFRKACVETVNKAGIRADDKDYRAKANQYMSKFIPNAGIKGYLLQNCINKPPKNPSPVINYNDGMIHWKNPVNHMANVSEENVADWPTIPEGIKFNGPVGFLRGTKSDFVLQKGRDAIAKLFPNNRIFDINATHFILNERPSEYVGIVADWFKTGRHDVEKLAAKKAKNAQL.

A mitochondrion-targeting transit peptide spans 1 to 16 (MFASNVVVLNKRSIRF). Active-site charge relay system residues include Ser-124, Asp-148, and His-296.

It belongs to the AB hydrolase superfamily.

The protein resides in the mitochondrion. It catalyses the reaction ethanol + acetyl-CoA = ethyl acetate + CoA. The enzyme catalyses acetyl-CoA + H2O = acetate + CoA + H(+). The catalysed reaction is ethyl acetate + H2O = ethanol + acetate + H(+). In terms of biological role, alcohol acetyltransferase that catalyzes the synthesis of ethyl acetate from ethanol and acetyl-CoA. Can also function as a thioesterase by hydrolyzing acetyl-CoA in the absence of ethanol, as well as esterase hydrolyzing ethyl acetate. This chain is Ethanol acetyltransferase 1 (EAT1), found in Hanseniaspora uvarum (Yeast).